The sequence spans 309 residues: MSFQDRTAEFQACVTKTRSRLRTTTANQAVGGPDQTKHQKSEFTRIAQKIANQINQTGEKLQKLSQLAKRKTLFDDRPVEIQELTFQIKQSLSSLNSDIASLQQVVKGNRNKPAQMNQHSENVVVSLQNSLANTSMTFKDILEIRTQNMKASQNRTEKFVASSSMNANPLINSGNSISPFADYNDPKPEANEDYLSLNLGDGANTRYEQMALLESQTDTYSQQRMSSIQNIESTITELGGIFSQLAQMVSEQRETVQRIDMHTDDIVSNIGSAQREIVKFYERMSSNRALLFKIFGIVIIFFLLWVLVT.

Residues 1-288 (MSFQDRTAEF…KFYERMSSNR (288 aa)) are Cytoplasmic-facing. Positions 37–66 (KHQKSEFTRIAQKIANQINQTGEKLQKLSQ) form a coiled coil. In terms of domain architecture, t-SNARE coiled-coil homology spans 218–280 (DTYSQQRMSS…GSAQREIVKF (63 aa)). Residues 289 to 308 (ALLFKIFGIVIIFFLLWVLV) traverse the membrane as a helical; Anchor for type IV membrane protein segment. Position 309 (threonine 309) is a topological domain, vesicular.

The protein belongs to the syntaxin family.

Its subcellular location is the membrane. The protein resides in the golgi apparatus membrane. In terms of biological role, required for vesicular transport between the endoplasmic reticulum and the Golgi complex. Acts as a target organelle soluble NSF attachment protein receptor (t-SNARE). This is Integral membrane protein sed5 (sed5) from Schizosaccharomyces pombe (strain 972 / ATCC 24843) (Fission yeast).